A 367-amino-acid polypeptide reads, in one-letter code: Voltage-gated potassium channel subunit beta-2 (367 aa).

3 positions are modified to phosphoserine: S9, S14, and S20. At R28 the chain carries Asymmetric dimethylarginine; alternate. The residue at position 28 (R28) is an Omega-N-methylarginine; alternate. S31 is subject to Phosphoserine. Residues T56, W57, Q63, and D85 each coordinate NADP(+). Y90 acts as the Proton donor/acceptor in catalysis. S112 carries the phosphoserine modification. K124 carries the post-translational modification N6-acetyllysine. Positions 158, 188, 189, 214, 243, 244, 245, 246, 247, 248, 254, 262, 264, 323, 325, 329, 332, and 333 each coordinate NADP(+).

The protein belongs to the shaker potassium channel beta subunit family. Homotetramer. Interaction with tetrameric potassium channel alpha subunits gives rise to a heterooctamer. Identified in potassium channel complexes containing KCNA1, KCNA2, KCNA4, KCNA5, KCNA6, KCNAB1, KCNAB2 and KCND3. Interacts (in unphosphorylated form) with MAPRE1. Forms a ternary complex with SQSTM1 and PRKCZ. Post-translationally, phosphorylated by PRKCZ; may be regulated by incorporation in a complex composed of PRKCZ and SQSTM1. In terms of tissue distribution, detected in the juxtaparanodal region of nodes of Ranvier in myelinated nerve fibers in the spinal cord (at protein level).

The protein localises to the cytoplasm. It localises to the membrane. It is found in the cell membrane. The protein resides in the cell projection. Its subcellular location is the axon. The protein localises to the synapse. It localises to the synaptosome. It is found in the cytoskeleton. The catalysed reaction is hydroxyacetone + NADP(+) = methylglyoxal + NADPH + H(+). The enzyme catalyses (E)-4-oxonon-2-en-1-ol + NADP(+) = (E)-4-oxonon-2-enal + NADPH + H(+). Functionally, regulatory subunit of the voltage-gated potassium (Kv) Shaker channels composed of pore-forming and potassium-conducting alpha subunits and of regulatory beta subunits. The beta-2/KCNAB2 cytoplasmic subunit promotes potassium channel closure via a mechanism that does not involve physical obstruction of the channel pore. Promotes the inactivation of Kv1.4/KCNA4 and Kv1.5/KCNA5 alpha subunit-containing channels. Displays nicotinamide adenine dinucleotide phosphate (NADPH)-dependent aldoketoreductase activity by catalyzing the NADPH-dependent reduction of a wide range of aldehyde and ketone substrates. Substrate specificity includes methylglyoxal, 9,10-phenanthrenequinone, prostaglandin J2, 4-nitrobenzaldehyde, 4-nitroacetophenone and 4-oxo-trans-2-nonenal (in vitro, no physiological substrate identified yet). The binding of oxidized and reduced nucleotide alters Kv channel gating and may contribute to dynamic fine tuning of cell excitability. Contributes to the regulation of nerve signaling, and prevents neuronal hyperexcitability. This chain is Voltage-gated potassium channel subunit beta-2 (KCNAB2), found in Bos taurus (Bovine).